We begin with the raw amino-acid sequence, 59 residues long: UPF0434 protein LHK_01103 (59 aa).

It belongs to the UPF0434 family.

This chain is UPF0434 protein LHK_01103, found in Laribacter hongkongensis (strain HLHK9).